Here is a 59-residue protein sequence, read N- to C-terminus: Large ribosomal subunit protein uL30 (59 aa).

Belongs to the universal ribosomal protein uL30 family. In terms of assembly, part of the 50S ribosomal subunit.

This Acetivibrio thermocellus (strain ATCC 27405 / DSM 1237 / JCM 9322 / NBRC 103400 / NCIMB 10682 / NRRL B-4536 / VPI 7372) (Clostridium thermocellum) protein is Large ribosomal subunit protein uL30.